A 92-amino-acid polypeptide reads, in one-letter code: Protein S100-B (92 aa).

Ser2 is modified (N-acetylserine). EF-hand domains lie at 13 to 48 (DVFH…LEEI) and 49 to 84 (KEQE…VTTA). Position 16 (His16) interacts with Zn(2+). Ser19, Glu22, and Asp24 together coordinate Ca(2+). His26 provides a ligand contact to Zn(2+). 5 residues coordinate Ca(2+): Asp62, Asp64, Asp66, Glu68, and Glu73. Positions 86 and 91 each coordinate Zn(2+).

This sequence belongs to the S-100 family. As to quaternary structure, dimer of either two alpha chains, or two beta chains, or one alpha and one beta chain. The S100B dimer binds two molecules of STK38. Interacts with CACYBP in a calcium-dependent manner. Interacts with ATAD3A; this interaction probably occurs in the cytosol prior to ATAD3A mitochondrial targeting. Interacts with S100A6. The S100B dimer interacts with two molecules of CAPZA1. Interacts with AGER. Interacts with PPP5C (via TPR repeats); the interaction is calcium-dependent and modulates PPP5C activity. Interacts with TPPP; this interaction inhibits TPPP dimerization. Interacts with isoform CLSTN3beta of CLSTN3; interaction promotes secretion.

It is found in the cytoplasm. The protein localises to the nucleus. The protein resides in the secreted. Functionally, small zinc- and- and calcium-binding protein that is highly expressed in astrocytes and constitutes one of the most abundant soluble proteins in brain. Weakly binds calcium but binds zinc very tightly-distinct binding sites with different affinities exist for both ions on each monomer. Physiological concentrations of potassium ion antagonize the binding of both divalent cations, especially affecting high-affinity calcium-binding sites. Acts as a neurotrophic factor that promotes astrocytosis and axonal proliferation. Involved in innervation of thermogenic adipose tissue by acting as an adipocyte-derived neurotrophic factor that promotes sympathetic innervation of adipose tissue. Binds to and initiates the activation of STK38 by releasing autoinhibitory intramolecular interactions within the kinase. Interaction with AGER after myocardial infarction may play a role in myocyte apoptosis by activating ERK1/2 and p53/TP53 signaling. Could assist ATAD3A cytoplasmic processing, preventing aggregation and favoring mitochondrial localization. May mediate calcium-dependent regulation on many physiological processes by interacting with other proteins, such as TPR-containing proteins, and modulating their activity. This is Protein S100-B from Mus musculus (Mouse).